The primary structure comprises 436 residues: Histidinol dehydrogenase (436 aa).

Residues Ser242, Gln264, and His267 each coordinate substrate. The Zn(2+) site is built by Gln264 and His267. Active-site proton acceptor residues include Glu332 and His333. Substrate contacts are provided by His333, Asp366, Glu420, and His425. Residue Asp366 coordinates Zn(2+). His425 is a Zn(2+) binding site.

The protein belongs to the histidinol dehydrogenase family. Zn(2+) is required as a cofactor.

It catalyses the reaction L-histidinol + 2 NAD(+) + H2O = L-histidine + 2 NADH + 3 H(+). Its pathway is amino-acid biosynthesis; L-histidine biosynthesis; L-histidine from 5-phospho-alpha-D-ribose 1-diphosphate: step 9/9. Its function is as follows. Catalyzes the sequential NAD-dependent oxidations of L-histidinol to L-histidinaldehyde and then to L-histidine. The sequence is that of Histidinol dehydrogenase from Nitratidesulfovibrio vulgaris (strain ATCC 29579 / DSM 644 / CCUG 34227 / NCIMB 8303 / VKM B-1760 / Hildenborough) (Desulfovibrio vulgaris).